The following is a 199-amino-acid chain: dITP/XTP pyrophosphatase (199 aa).

Residue Thr-8–Lys-13 participates in substrate binding. Catalysis depends on Asp-68, which acts as the Proton acceptor. Asp-68 contacts Mg(2+). Substrate is bound by residues Ser-69, Phe-155–Asn-158, Lys-177, and His-182–Arg-183.

The protein belongs to the HAM1 NTPase family. As to quaternary structure, homodimer. Mg(2+) serves as cofactor.

The catalysed reaction is XTP + H2O = XMP + diphosphate + H(+). It carries out the reaction dITP + H2O = dIMP + diphosphate + H(+). The enzyme catalyses ITP + H2O = IMP + diphosphate + H(+). Its function is as follows. Pyrophosphatase that catalyzes the hydrolysis of nucleoside triphosphates to their monophosphate derivatives, with a high preference for the non-canonical purine nucleotides XTP (xanthosine triphosphate), dITP (deoxyinosine triphosphate) and ITP. Seems to function as a house-cleaning enzyme that removes non-canonical purine nucleotides from the nucleotide pool, thus preventing their incorporation into DNA/RNA and avoiding chromosomal lesions. This chain is dITP/XTP pyrophosphatase, found in Borrelia recurrentis (strain A1).